A 429-amino-acid polypeptide reads, in one-letter code: Enolase (429 aa).

Q162 is a binding site for (2R)-2-phosphoglycerate. Catalysis depends on E204, which acts as the Proton donor. D241, E283, and D310 together coordinate Mg(2+). (2R)-2-phosphoglycerate is bound by residues K335, R364, S365, and K386. K335 serves as the catalytic Proton acceptor.

The protein belongs to the enolase family. Requires Mg(2+) as cofactor.

The protein localises to the cytoplasm. The protein resides in the secreted. It localises to the cell surface. The enzyme catalyses (2R)-2-phosphoglycerate = phosphoenolpyruvate + H2O. It functions in the pathway carbohydrate degradation; glycolysis; pyruvate from D-glyceraldehyde 3-phosphate: step 4/5. Catalyzes the reversible conversion of 2-phosphoglycerate (2-PG) into phosphoenolpyruvate (PEP). It is essential for the degradation of carbohydrates via glycolysis. The chain is Enolase from Mycobacterium avium (strain 104).